Reading from the N-terminus, the 428-residue chain is Septin homolog spn7 (428 aa).

One can recognise a Septin-type G domain in the interval 15 to 290 (KGKKLRIMVA…ENYRTEKLSN (276 aa)). Positions 25-32 (GSSYTSYQ) are G1 motif. GTP contacts are provided by residues 25–32 (GSSYTSYQ), glycine 86, 166–174 (NSNAFTEEE), and glycine 224. The segment at 83-86 (EVNG) is G3 motif. The tract at residues 165-168 (GNSN) is G4 motif. 2 disordered regions span residues 287–345 (KLSN…SEEL) and 387–414 (KEFP…KKMD). The span at 290–307 (NDSPSNTSLSLQKQNSIV) shows a compositional bias: polar residues. Residues 309–325 (NEDKRSVNGSERTETRS) show a composition bias toward basic and acidic residues. 2 stretches are compositionally biased toward polar residues: residues 326–339 (SIDQ…VSDS) and 392–405 (RTTS…NNTT).

It belongs to the TRAFAC class TrmE-Era-EngA-EngB-Septin-like GTPase superfamily. Septin GTPase family. In terms of assembly, component of the sporulation-specific septin complex composed of at least spn2, spn5, spn6 and spn7.

The protein resides in the cytoplasm. Its subcellular location is the nucleus. It is found in the forespore membrane. Septin-like protein involved in the correct orientation of forespore membrane extension during sporulation. Binds phosphatidylinositol 4-phosphate. The polypeptide is Septin homolog spn7 (spn7) (Schizosaccharomyces pombe (strain 972 / ATCC 24843) (Fission yeast)).